The primary structure comprises 70 residues: Guanine nucleotide-binding protein subunit gamma-1 (70 aa).

Cysteine methyl ester is present on C67. A lipid anchor (S-geranylgeranyl cysteine) is attached at C67. Positions 68 to 70 (TVL) are cleaved as a propeptide — removed in mature form.

This sequence belongs to the G protein gamma family. In terms of assembly, g proteins are composed of 3 units, alpha, beta and gamma. Predominantly expressed in the central nervous system.

It localises to the cell membrane. Guanine nucleotide-binding proteins (G proteins) are involved as a modulator or transducer in various transmembrane signaling systems. The beta and gamma chains are required for the GTPase activity, for replacement of GDP by GTP, and for G protein-effector interaction. The sequence is that of Guanine nucleotide-binding protein subunit gamma-1 (Ggamma1) from Drosophila melanogaster (Fruit fly).